A 294-amino-acid polypeptide reads, in one-letter code: MPEIITPIITPFTKDNRIDKEKLKIHAENLIRKGIDKLFVNGTTGLGPSLSPEEKLENLKAVYDVTNKIIFQVGGLNLDDAIRLAKLSKDFDIVGIASYAPYYYPRMSEKHLVKYFKTLCEVSPHPVYLYNYPTATGKDIDAKVAKEIGCFTGVKDTIENIIHTLDYKRLNPNMLVYSGSDMLIATVASTGLDGNVAAGSNYLPEVTVTIKKLAMERKIDEALKLQFLHDEVIEASRIFGSLSSNYVLTKYFQGYDLGYPRPPIFPLDDEEERQLIKKVEGIRAKLVELKILKE.

Residues 43–44, 130–132, and 155–157 contribute to the substrate site; these read TT, YNY, and KDT. The active-site Schiff-base intermediate with substrate is Lys-155.

It belongs to the DapA family. KDPG aldolase subfamily. Homotetramer; dimer of dimers.

It catalyses the reaction 2-dehydro-3-deoxy-6-phospho-D-gluconate = D-glyceraldehyde 3-phosphate + pyruvate. The catalysed reaction is 2-dehydro-3-deoxy-6-phospho-D-galactonate = D-glyceraldehyde 3-phosphate + pyruvate. Its pathway is carbohydrate acid metabolism; 2-dehydro-3-deoxy-D-gluconate degradation; D-glyceraldehyde 3-phosphate and pyruvate from 2-dehydro-3-deoxy-D-gluconate: step 2/2. Its function is as follows. Involved in the degradation of glucose and galactose via the Entner-Doudoroff pathway. Catalyzes the reversible cleavage of 2-keto-3-deoxy-6-phosphogluconate (KDPG) and 2-keto-3-deoxygluconate (KDG) forming pyruvate and glyceraldehyde 3-phosphate or glyceraldehyde, respectively. It is also able to catalyze the reversible cleavage of 2-keto-3-deoxy-6-phosphogalactonate (KDPGal) and 2-keto-3-deoxygalactonate (KDGal). It is equally active with both D- and L-glyceraldehyde. The protein is 2-dehydro-3-deoxy-phosphogluconate/2-dehydro-3-deoxy-6-phosphogalactonate aldolase of Saccharolobus solfataricus (Sulfolobus solfataricus).